A 225-amino-acid polypeptide reads, in one-letter code: Nuclear protein UL4 homolog (225 aa).

It belongs to the alphaherpesvirinae HHV-1 UL4 family.

The protein localises to the host nucleus. The sequence is that of Nuclear protein UL4 homolog from Equus caballus (Horse).